Consider the following 1403-residue polypeptide: Perilipin-4 (1403 aa).

The interval 1–21 is disordered; that stretch reads MSASGDGTRVPPKSKGKTLSS. Phosphoserine occurs at positions 25 and 31. The tract at residues 33-70 is disordered; that stretch reads RNLVSHTHSSTSTKDLQTATDPSGTPAPSSKVSTNSQM. 29 tandem repeats follow at residues 104–136, 137–169, 170–202, 203–235, 236–268, 269–301, 302–334, 335–367, 368–400, 401–433, 434–466, 467–499, 500–532, 533–565, 566–598, 599–631, 632–664, 665–697, 698–730, 731–763, 764–796, 797–829, 830–862, 863–895, 896–928, 929–961, 962–994, 995–1027, and 1028–1060. The interval 104 to 1060 is 29 X 33 AA approximate tandem repeat; sequence GVFGIMDAAK…VTSAMNMAKG (957 aa). Serine 1281 bears the Phosphoserine mark. Threonine 1287 is subject to Phosphothreonine.

The protein belongs to the perilipin family. In terms of tissue distribution, specifically expressed in white adipose tissue and also weakly detected in heart and skeletal muscle (at protein level).

It is found in the cell membrane. The protein resides in the cytoplasm. It localises to the lipid droplet. Its function is as follows. May play a role in triacylglycerol packaging into adipocytes. May function as a coat protein involved in the biogenesis of lipid droplets. The polypeptide is Perilipin-4 (Plin4) (Mus musculus (Mouse)).